The following is a 258-amino-acid chain: Imidazole glycerol phosphate synthase subunit HisF (258 aa).

Active-site residues include D12 and D131.

Belongs to the HisA/HisF family. In terms of assembly, heterodimer of HisH and HisF.

It localises to the cytoplasm. It carries out the reaction 5-[(5-phospho-1-deoxy-D-ribulos-1-ylimino)methylamino]-1-(5-phospho-beta-D-ribosyl)imidazole-4-carboxamide + L-glutamine = D-erythro-1-(imidazol-4-yl)glycerol 3-phosphate + 5-amino-1-(5-phospho-beta-D-ribosyl)imidazole-4-carboxamide + L-glutamate + H(+). It functions in the pathway amino-acid biosynthesis; L-histidine biosynthesis; L-histidine from 5-phospho-alpha-D-ribose 1-diphosphate: step 5/9. In terms of biological role, IGPS catalyzes the conversion of PRFAR and glutamine to IGP, AICAR and glutamate. The HisF subunit catalyzes the cyclization activity that produces IGP and AICAR from PRFAR using the ammonia provided by the HisH subunit. The sequence is that of Imidazole glycerol phosphate synthase subunit HisF from Nocardioides sp. (strain ATCC BAA-499 / JS614).